A 281-amino-acid chain; its full sequence is sn-glycerol-3-phosphate transport system permease protein UgpE (281 aa).

A run of 6 helical transmembrane segments spans residues 16–36 (LILG…AATL), 85–105 (FSIT…IVWF), 113–133 (FFWM…FPTV), 142–162 (LDSY…TFLF), 202–222 (ALFV…LLII), and 247–267 (WNSV…IVLV). An ABC transmembrane type-1 domain is found at 77–268 (LLNSFVMAFS…IPPVVIVLVM (192 aa)).

Belongs to the binding-protein-dependent transport system permease family. UgpAE subfamily. In terms of assembly, the complex is composed of two ATP-binding proteins (UgpC), two transmembrane proteins (UgpA and UgpE) and a solute-binding protein (UgpB).

The protein localises to the cell inner membrane. In terms of biological role, part of the ABC transporter complex UgpBAEC involved in sn-glycerol-3-phosphate (G3P) import. Probably responsible for the translocation of the substrate across the membrane. This Shigella flexneri serotype 5b (strain 8401) protein is sn-glycerol-3-phosphate transport system permease protein UgpE (ugpE).